The sequence spans 408 residues: Glutamate N-acetyltransferase (408 aa).

Substrate is bound by residues Thr-150, Lys-176, Thr-189, Glu-271, Asn-403, and Thr-408. Residue Thr-189 is the Nucleophile of the active site.

Belongs to the ArgJ family. As to quaternary structure, heterotetramer of two alpha and two beta chains.

The protein localises to the cytoplasm. It catalyses the reaction N(2)-acetyl-L-ornithine + L-glutamate = N-acetyl-L-glutamate + L-ornithine. It functions in the pathway amino-acid biosynthesis; L-arginine biosynthesis; L-ornithine and N-acetyl-L-glutamate from L-glutamate and N(2)-acetyl-L-ornithine (cyclic): step 1/1. In terms of biological role, catalyzes the transfer of the acetyl group from N(2)-acetylornithine to glutamate, forming N-acetylglutamate and L-ornithine. The chain is Glutamate N-acetyltransferase from Methanococcus vannielii (strain ATCC 35089 / DSM 1224 / JCM 13029 / OCM 148 / SB).